We begin with the raw amino-acid sequence, 294 residues long: Large ribosomal subunit protein uL4m (294 aa).

The segment at Val120–Gly139 is disordered. Omega-N-methylarginine is present on Arg147.

The protein belongs to the universal ribosomal protein uL4 family. As to quaternary structure, component of the mitochondrial ribosome large subunit (39S) which comprises a 16S rRNA and about 50 distinct proteins. Interacts with MIEF1 upstream open reading frame protein.

Its subcellular location is the mitochondrion. The protein is Large ribosomal subunit protein uL4m (MRPL4) of Bos taurus (Bovine).